A 357-amino-acid polypeptide reads, in one-letter code: D-alanine--D-alanine ligase (357 aa).

The region spanning 134 to 339 (KQLFEHRGLP…YPDLIAKLID (206 aa)) is the ATP-grasp domain. 167-222 (NDKLTYPVFVKPANLGSSVGISKCNNEEELKSGITEAFQFDRKLVIEQGINAREIE) contacts ATP. Asp-293, Glu-306, and Asn-308 together coordinate Mg(2+).

It belongs to the D-alanine--D-alanine ligase family. Mg(2+) serves as cofactor. Requires Mn(2+) as cofactor.

It localises to the cytoplasm. The catalysed reaction is 2 D-alanine + ATP = D-alanyl-D-alanine + ADP + phosphate + H(+). It participates in cell wall biogenesis; peptidoglycan biosynthesis. Functionally, cell wall formation. This Staphylococcus epidermidis (strain ATCC 12228 / FDA PCI 1200) protein is D-alanine--D-alanine ligase.